The primary structure comprises 447 residues: Cobyrinate a,c-diamide synthase (447 aa).

The 188-residue stretch at 252 to 439 (KIAVAFDESF…AHQHCIGNPY (188 aa)) folds into the GATase cobBQ-type domain. Cys331 serves as the catalytic Nucleophile.

Belongs to the CobB/CbiA family. Requires Mg(2+) as cofactor.

It catalyses the reaction cob(II)yrinate + 2 L-glutamine + 2 ATP + 2 H2O = cob(II)yrinate a,c diamide + 2 L-glutamate + 2 ADP + 2 phosphate + 2 H(+). The catalysed reaction is Ni-sirohydrochlorin + 2 L-glutamine + 2 ATP + 2 H2O = Ni-sirohydrochlorin a,c-diamide + 2 L-glutamate + 2 ADP + 2 phosphate + 2 H(+). It functions in the pathway cofactor biosynthesis; adenosylcobalamin biosynthesis; cob(II)yrinate a,c-diamide from sirohydrochlorin (anaerobic route): step 10/10. Catalyzes the ATP-dependent amidation of the two carboxylate groups at positions a and c of cobyrinate, using either L-glutamine or ammonia as the nitrogen source. Involved in the biosynthesis of the unique nickel-containing tetrapyrrole coenzyme F430, the prosthetic group of methyl-coenzyme M reductase (MCR), which plays a key role in methanogenesis and anaerobic methane oxidation. Catalyzes the ATP-dependent amidation of the two carboxylate groups at positions a and c of Ni-sirohydrochlorin, using L-glutamine or ammonia as the nitrogen source. The protein is Cobyrinate a,c-diamide synthase of Methanococcus maripaludis (strain C5 / ATCC BAA-1333).